Consider the following 393-residue polypeptide: S-adenosylmethionine synthase (393 aa).

His17 provides a ligand contact to ATP. Residue Asp19 participates in Mg(2+) binding. Glu45 lines the K(+) pocket. L-methionine contacts are provided by Glu58 and Gln106. The interval Gln106–Ala116 is flexible loop. ATP is bound by residues Asp171–Lys173, Asp246, Arg252–Lys253, Ala269, and Lys273. Asp246 lines the L-methionine pocket. Lys277 serves as a coordination point for L-methionine.

It belongs to the AdoMet synthase family. As to quaternary structure, homotetramer; dimer of dimers. Mg(2+) is required as a cofactor. Requires K(+) as cofactor.

It localises to the cytoplasm. The enzyme catalyses L-methionine + ATP + H2O = S-adenosyl-L-methionine + phosphate + diphosphate. It participates in amino-acid biosynthesis; S-adenosyl-L-methionine biosynthesis; S-adenosyl-L-methionine from L-methionine: step 1/1. In terms of biological role, catalyzes the formation of S-adenosylmethionine (AdoMet) from methionine and ATP. The overall synthetic reaction is composed of two sequential steps, AdoMet formation and the subsequent tripolyphosphate hydrolysis which occurs prior to release of AdoMet from the enzyme. The chain is S-adenosylmethionine synthase from Roseobacter denitrificans (strain ATCC 33942 / OCh 114) (Erythrobacter sp. (strain OCh 114)).